Here is a 948-residue protein sequence, read N- to C-terminus: Bifunctional glutamine synthetase adenylyltransferase/adenylyl-removing enzyme (948 aa).

The adenylyl removase stretch occupies residues 1–445 (MAPPPDTSGS…IFTEVIAEPP (445 aa)). The interval 451–948 (EPLLDGGEAE…WKQIIEAPVF (498 aa)) is adenylyl transferase.

Belongs to the GlnE family. It depends on Mg(2+) as a cofactor.

It carries out the reaction [glutamine synthetase]-O(4)-(5'-adenylyl)-L-tyrosine + phosphate = [glutamine synthetase]-L-tyrosine + ADP. It catalyses the reaction [glutamine synthetase]-L-tyrosine + ATP = [glutamine synthetase]-O(4)-(5'-adenylyl)-L-tyrosine + diphosphate. Functionally, involved in the regulation of glutamine synthetase GlnA, a key enzyme in the process to assimilate ammonia. When cellular nitrogen levels are high, the C-terminal adenylyl transferase (AT) inactivates GlnA by covalent transfer of an adenylyl group from ATP to specific tyrosine residue of GlnA, thus reducing its activity. Conversely, when nitrogen levels are low, the N-terminal adenylyl removase (AR) activates GlnA by removing the adenylyl group by phosphorolysis, increasing its activity. The regulatory region of GlnE binds the signal transduction protein PII (GlnB) which indicates the nitrogen status of the cell. This is Bifunctional glutamine synthetase adenylyltransferase/adenylyl-removing enzyme from Methylococcus capsulatus (strain ATCC 33009 / NCIMB 11132 / Bath).